A 293-amino-acid polypeptide reads, in one-letter code: 4-hydroxy-tetrahydrodipicolinate synthase (293 aa).

Residue Thr-46 coordinates pyruvate. Tyr-134 functions as the Proton donor/acceptor in the catalytic mechanism. Lys-162 functions as the Schiff-base intermediate with substrate in the catalytic mechanism. Ile-204 serves as a coordination point for pyruvate.

The protein belongs to the DapA family. In terms of assembly, homotetramer; dimer of dimers.

The protein localises to the cytoplasm. The catalysed reaction is L-aspartate 4-semialdehyde + pyruvate = (2S,4S)-4-hydroxy-2,3,4,5-tetrahydrodipicolinate + H2O + H(+). It participates in amino-acid biosynthesis; L-lysine biosynthesis via DAP pathway; (S)-tetrahydrodipicolinate from L-aspartate: step 3/4. In terms of biological role, catalyzes the condensation of (S)-aspartate-beta-semialdehyde [(S)-ASA] and pyruvate to 4-hydroxy-tetrahydrodipicolinate (HTPA). The sequence is that of 4-hydroxy-tetrahydrodipicolinate synthase from Bdellovibrio bacteriovorus (strain ATCC 15356 / DSM 50701 / NCIMB 9529 / HD100).